Consider the following 623-residue polypeptide: Protein Atg16l2 (623 aa).

A compositionally biased stretch (basic and acidic residues) spans 64–79 (PKDAISTRHEDWREEV). The segment at 64 to 93 (PKDAISTRHEDWREEVSGTGPDQVSSPASL) is disordered. Residues 116-229 (VKKSAALDTL…ANQALVSQEL (114 aa)) are a coiled coil. 7 WD repeats span residues 338–377 (AHLS…LEAN), 382–421 (GAGG…SKET), 424–458 (GHKD…LGRA), 459–502 (YCSR…CIQV), 504–543 (PVQG…IRQV), 550–589 (KCSS…LETS), and 593–623 (PHCT…VLWH).

The protein belongs to the WD repeat ATG16 family. As to quaternary structure, homooligomer. Heterooligomer with ATG16L2. Interacts with ATG5. Self-oligomerizes to form a 800-kDa complex composed of ATG12-ATG5 and ATG16L2. Interacts with RAB33B. As to expression, widely expressed.

It localises to the cytoplasm. It is found in the cytosol. In terms of biological role, may play a role in regulating epithelial homeostasis in an ATG16L1-dependent manner. In Mus musculus (Mouse), this protein is Protein Atg16l2 (Atg16l2).